The following is a 489-amino-acid chain: Putative ABC transporter ATP-binding protein TDE_0282 (489 aa).

ABC transporter domains lie at 2-241 and 269-487; these read ITLR…SMKL and FAVK…MQLE. ATP-binding positions include 36-43 and 301-308; these read GASGCGKT and GENGAGKT.

This sequence belongs to the ABC transporter superfamily.

Its subcellular location is the cell inner membrane. Probably part of an ABC transporter complex. Responsible for energy coupling to the transport system. In Treponema denticola (strain ATCC 35405 / DSM 14222 / CIP 103919 / JCM 8153 / KCTC 15104), this protein is Putative ABC transporter ATP-binding protein TDE_0282.